A 423-amino-acid chain; its full sequence is Glycine amidinotransferase, mitochondrial (423 aa).

The N-terminal 43 residues, 1–43 (MLRVRCLRGGSRGAEAVHYIGSRLGGSLTGWVQRTFQSTQAAT), are a transit peptide targeting the mitochondrion. Ser-46 and Ser-49 each carry phosphoserine. Asp-170 is a binding site for arginine. Active-site residues include Asp-254 and His-303. Residues Asp-305, Arg-322, Ser-354, and Ser-355 each contribute to the arginine site. Residue Lys-385 is modified to N6-acetyllysine. The Amidino-cysteine intermediate role is filled by Cys-407.

Belongs to the amidinotransferase family. Homodimer. In terms of tissue distribution, highly expressed in the kidney and pancreas, especially in the proximal tubules of the kidney, and alpha cells of the pancreatic islets (at protein level). Moderately expressed in liver hepatocytes (at protein level). Expressed in the kidney, pancreas, liver, colon, ileum, jejunum, heart and skeletal muscle. In reproductive tissues, expressed in the testis, epididymis, ovary, oviduct and uterus. Expressed throughout the brain in neurons, astrocytes and oligodendrocytes. In 12.5 dpc embryos, it is expressed in the middle part of the somites, hepatic primordium and wall of the dorsal aorta. Expressed in 15.5 dpc embryos in isolated cells throughout the central nervous system, skeletal muscles, gonad primordia, caudal somites, liver and pancreas, but not in the choroid plexus, root ganglia or kidney. Expressed in skeletal muscle, kidney, pancreas, central nervous system, liver and intestine epithelial cells, but not in epidermis, dermis, olfactory epithelium, trachea, lung, stomach or heart in 18.5 dpc embryos.

The protein localises to the mitochondrion inner membrane. It carries out the reaction L-arginine + glycine = guanidinoacetate + L-ornithine. It catalyses the reaction 4-aminobutanoate + L-arginine = 4-guanidinobutanoate + L-ornithine. The catalysed reaction is beta-alanine + L-arginine = 3-guanidinopropanoate + L-ornithine. The enzyme catalyses taurine + L-arginine = taurocyamine + L-ornithine. The protein operates within amine and polyamine biosynthesis; creatine biosynthesis; creatine from L-arginine and glycine: step 1/2. Transamidinase that catalyzes the transfer of the amidino group of L-arginine onto the amino moiety of acceptor metabolites such as glycine, beta-alanine, gamma-aminobutyric acid (GABA) and taurine yielding the corresponding guanidine derivatives. Catalyzes the rate-limiting step of creatine biosynthesis, namely the transfer of the amidino group from L-arginine to glycine to generate guanidinoacetate, which is then methylated by GAMT to form creatine. Provides creatine as a source for ATP generation in tissues with high energy demands, in particular skeletal muscle, heart and brain. In Rattus norvegicus (Rat), this protein is Glycine amidinotransferase, mitochondrial (Gatm).